The chain runs to 603 residues: Carbon catabolite repressor protein 4 homolog 2 (603 aa).

The interval 115-136 (ENNANEDDDLNRNNSAGSGSLA) is disordered. Over residues 126–136 (RNNSAGSGSLA) the composition is skewed to low complexity. Position 302 (Glu302) interacts with Mg(2+).

This sequence belongs to the CCR4/nocturin family. In terms of assembly, component of the CCR4-NOT complex, at least composed of CRR4 and CAF1 proteins. It depends on Mg(2+) as a cofactor.

It localises to the nucleus. Its subcellular location is the cytoplasm. The enzyme catalyses Exonucleolytic cleavage of poly(A) to 5'-AMP.. Its function is as follows. Acts as a catalytic component of the CCR4-NOT core complex, which in the nucleus seems to be a general transcription factor, and in the cytoplasm the major mRNA deadenylase involved in mRNA turnover. In Arabidopsis thaliana (Mouse-ear cress), this protein is Carbon catabolite repressor protein 4 homolog 2 (CCR4-2).